An 804-amino-acid polypeptide reads, in one-letter code: Probable exo-1,4-beta-xylosidase xlnD (804 aa).

The first 17 residues, 1-17, serve as a signal peptide directing secretion; sequence MAVAALALLALLPQALG. 5 N-linked (GlcNAc...) asparagine glycosylation sites follow: Asn20, Asn115, Asn139, Asn234, and Asn243. The active site involves Asp307. Asn349, Asn382, Asn404, Asn433, Asn444, Asn485, Asn489, Asn621, Asn652, Asn666, Asn688, and Asn710 each carry an N-linked (GlcNAc...) asparagine glycan.

The protein belongs to the glycosyl hydrolase 3 family.

Its subcellular location is the secreted. It catalyses the reaction Hydrolysis of (1-&gt;4)-beta-D-xylans, to remove successive D-xylose residues from the non-reducing termini.. Its pathway is glycan degradation; xylan degradation. Xylan 1,4-beta-xylosidase involved in the hydrolysis of xylan, a major structural heterogeneous polysaccharide found in plant biomass representing the second most abundant polysaccharide in the biosphere, after cellulose. This is Probable exo-1,4-beta-xylosidase xlnD (xlnD) from Aspergillus japonicus.